Here is a 355-residue protein sequence, read N- to C-terminus: Protein RecA (355 aa).

Residue 72-79 coordinates ATP; the sequence is GPESSGKT.

Belongs to the RecA family.

It localises to the cytoplasm. In terms of biological role, can catalyze the hydrolysis of ATP in the presence of single-stranded DNA, the ATP-dependent uptake of single-stranded DNA by duplex DNA, and the ATP-dependent hybridization of homologous single-stranded DNAs. It interacts with LexA causing its activation and leading to its autocatalytic cleavage. This chain is Protein RecA, found in Thermosynechococcus vestitus (strain NIES-2133 / IAM M-273 / BP-1).